Reading from the N-terminus, the 295-residue chain is Glycine--tRNA ligase alpha subunit (295 aa).

The protein belongs to the class-II aminoacyl-tRNA synthetase family. Tetramer of two alpha and two beta subunits.

Its subcellular location is the cytoplasm. The enzyme catalyses tRNA(Gly) + glycine + ATP = glycyl-tRNA(Gly) + AMP + diphosphate. The protein is Glycine--tRNA ligase alpha subunit of Thermosynechococcus vestitus (strain NIES-2133 / IAM M-273 / BP-1).